We begin with the raw amino-acid sequence, 474 residues long: Siroheme synthase (474 aa).

The segment at Met1–Leu203 is precorrin-2 dehydrogenase /sirohydrochlorin ferrochelatase. Residues Glu22–Ile23 and Pro43–Ala44 each bind NAD(+). Ser128 is modified (phosphoserine). Residues Gly216–Ala474 are uroporphyrinogen-III C-methyltransferase. Pro225 serves as a coordination point for S-adenosyl-L-methionine. Asp248 (proton acceptor) is an active-site residue. Residue Lys270 is the Proton donor of the active site. S-adenosyl-L-methionine-binding positions include Gly302–Asp304, Ile307, Thr332–Ala333, Met384, and Gly413.

The protein in the N-terminal section; belongs to the precorrin-2 dehydrogenase / sirohydrochlorin ferrochelatase family. In the C-terminal section; belongs to the precorrin methyltransferase family.

The catalysed reaction is uroporphyrinogen III + 2 S-adenosyl-L-methionine = precorrin-2 + 2 S-adenosyl-L-homocysteine + H(+). It carries out the reaction precorrin-2 + NAD(+) = sirohydrochlorin + NADH + 2 H(+). The enzyme catalyses siroheme + 2 H(+) = sirohydrochlorin + Fe(2+). The protein operates within cofactor biosynthesis; adenosylcobalamin biosynthesis; precorrin-2 from uroporphyrinogen III: step 1/1. Its pathway is cofactor biosynthesis; adenosylcobalamin biosynthesis; sirohydrochlorin from precorrin-2: step 1/1. It functions in the pathway porphyrin-containing compound metabolism; siroheme biosynthesis; precorrin-2 from uroporphyrinogen III: step 1/1. It participates in porphyrin-containing compound metabolism; siroheme biosynthesis; siroheme from sirohydrochlorin: step 1/1. The protein operates within porphyrin-containing compound metabolism; siroheme biosynthesis; sirohydrochlorin from precorrin-2: step 1/1. Functionally, multifunctional enzyme that catalyzes the SAM-dependent methylations of uroporphyrinogen III at position C-2 and C-7 to form precorrin-2 via precorrin-1. Then it catalyzes the NAD-dependent ring dehydrogenation of precorrin-2 to yield sirohydrochlorin. Finally, it catalyzes the ferrochelation of sirohydrochlorin to yield siroheme. The sequence is that of Siroheme synthase from Bordetella petrii (strain ATCC BAA-461 / DSM 12804 / CCUG 43448).